The primary structure comprises 200 residues: Recombination protein RecR (200 aa).

Residues 57 to 72 (CRSCRTLTEEELCPQC) form a C4-type zinc finger. The Toprim domain maps to 80 to 175 (TLLCVVEGPT…VASRIAHGVP (96 aa)).

The protein belongs to the RecR family.

Its function is as follows. May play a role in DNA repair. It seems to be involved in an RecBC-independent recombinational process of DNA repair. It may act with RecF and RecO. In Pseudomonas savastanoi pv. phaseolicola (strain 1448A / Race 6) (Pseudomonas syringae pv. phaseolicola (strain 1448A / Race 6)), this protein is Recombination protein RecR.